The chain runs to 335 residues: MSDLCVGINGFGRIGRLVLRACLQKGIKVVAINDPFIDLQYMVYMFKYDSTHGRYKGEVSMEDGKLIVDDHSISVFQCMKPHEIPWGKAGADYVVESTGVFLSIDKASSHIQGGAKRVVVSAPSPDAPMFVMGVNEDKFDPSSMTIVSNASCTTNCLAPLAKVIHDNFGIEEALMTTVHAYTATQKTVDGPSAKAWRDGRGAHQNIIPASTGAAKAVGKVIPELNGKLTGMAFRVPVADVSVVELTCRLSRPGSYAEIKGAVKKAAEGPMKGYVGYTEYSVVSSDFIGDTHSSMFDAGAGISFNDNFVKLISWYDNEFGYSHRVADLLLYMHFKE.

NAD(+)-binding positions include 13–14 (RI), aspartate 34, methionine 79, and serine 121. D-glyceraldehyde 3-phosphate is bound by residues 151 to 153 (SCT), threonine 182, 211 to 212 (TG), and arginine 234. Cysteine 152 functions as the Nucleophile in the catalytic mechanism. Cysteine 152 bears the S-nitrosocysteine mark. Residue asparagine 316 participates in NAD(+) binding.

The protein belongs to the glyceraldehyde-3-phosphate dehydrogenase family. Homotetramer. Post-translationally, S-nitrosylation of Cys-152 leads to translocation to the nucleus.

The protein localises to the cytoplasm. It is found in the cytosol. Its subcellular location is the cytoskeleton. It localises to the nucleus. It carries out the reaction D-glyceraldehyde 3-phosphate + phosphate + NAD(+) = (2R)-3-phospho-glyceroyl phosphate + NADH + H(+). The enzyme catalyses S-nitroso-L-cysteinyl-[GAPDH] + L-cysteinyl-[protein] = L-cysteinyl-[GAPDH] + S-nitroso-L-cysteinyl-[protein]. Its pathway is carbohydrate degradation; glycolysis; pyruvate from D-glyceraldehyde 3-phosphate: step 1/5. Its function is as follows. Has both glyceraldehyde-3-phosphate dehydrogenase and nitrosylase activities, thereby playing a role in glycolysis and nuclear functions, respectively. Glyceraldehyde-3-phosphate dehydrogenase is a key enzyme in glycolysis that catalyzes the first step of the pathway by converting D-glyceraldehyde 3-phosphate (G3P) into 3-phospho-D-glyceroyl phosphate. Participates in nuclear events including transcription, RNA transport, DNA replication and apoptosis. Nuclear functions are probably due to the nitrosylase activity that mediates cysteine S-nitrosylation of nuclear target proteins such as SIRT1, HDAC2 and PRKDC. The chain is Glyceraldehyde-3-phosphate dehydrogenase (gapdh) from Oncorhynchus mykiss (Rainbow trout).